The primary structure comprises 565 residues: Ubiquitin carboxyl-terminal hydrolase 21 (565 aa).

Basic and acidic residues-rich tracts occupy residues 1–14 (MPQASEHRLGRTRE) and 58–70 (PPDERLKKLDLGR). Residues 1 to 128 (MPQASEHRLG…LRPMGIALGG (128 aa)) are disordered. Residues 71–81 (GRTSGSRPRGP) are compositionally biased toward low complexity. Polar residues predominate over residues 104 to 116 (SRTNLTRSKSVSS). A Nuclear export signal motif is present at residues 134 to 152 (ELGAALSRLALRPEPPTLR). A USP domain is found at 212-558 (VGLRNLGNTC…EGYVLFYQLM (347 aa)). The active-site Nucleophile is C221. The interval 324-347 (APPILASGPVPSPPRRGGALHEEP) is disordered. 4 residues coordinate Zn(2+): C384, C387, C437, and C440. The active-site Proton acceptor is the H518.

This sequence belongs to the peptidase C19 family. USP21 subfamily. In terms of assembly, interacts with BEND3.

Its subcellular location is the cytoplasm. The protein localises to the nucleus. The enzyme catalyses Thiol-dependent hydrolysis of ester, thioester, amide, peptide and isopeptide bonds formed by the C-terminal Gly of ubiquitin (a 76-residue protein attached to proteins as an intracellular targeting signal).. In terms of biological role, deubiquitinates histone H2A, a specific tag for epigenetic transcriptional repression, thereby acting as a coactivator. Deubiquitination of histone H2A releaves the repression of di- and trimethylation of histone H3 at 'Lys-4', resulting in regulation of transcriptional initiation. Regulates gene expression via histone H2A deubiquitination. Deubiquitinates BAZ2A/TIP5 leading to its stabilization. Also capable of removing NEDD8 from NEDD8 conjugates but has no effect on Sentrin-1 conjugates. Also acts as a negative regulator of the ribosome quality control (RQC) by mediating deubiquitination of 40S ribosomal proteins RPS10/eS10 and RPS20/uS10, thereby antagonizing ZNF598-mediated 40S ubiquitination. This chain is Ubiquitin carboxyl-terminal hydrolase 21 (Usp21), found in Rattus norvegicus (Rat).